The chain runs to 38 residues: Large ribosomal subunit protein bL36 (38 aa).

Belongs to the bacterial ribosomal protein bL36 family.

The sequence is that of Large ribosomal subunit protein bL36 from Paraburkholderia phymatum (strain DSM 17167 / CIP 108236 / LMG 21445 / STM815) (Burkholderia phymatum).